A 182-amino-acid chain; its full sequence is Adenylate kinase (182 aa).

Residue 12 to 17 coordinates ATP; that stretch reads GAGKGT. The tract at residues 32–61 is NMP; it reads STGDLLRDEVSSGSVLGIKAAEIMNKGELV. AMP contacts are provided by residues Thr-33, Arg-38, 59-61, 85-88, and Gln-92; these read ELV and GFPR. The segment at 126 to 132 is LID; the sequence is ERGRQDD. Residue Arg-127 participates in ATP binding. AMP is bound by residues Arg-129 and Arg-140. Ala-168 contacts ATP.

The protein belongs to the adenylate kinase family. Monomer.

It localises to the cytoplasm. It carries out the reaction AMP + ATP = 2 ADP. Its pathway is purine metabolism; AMP biosynthesis via salvage pathway; AMP from ADP: step 1/1. Its function is as follows. Catalyzes the reversible transfer of the terminal phosphate group between ATP and AMP. Plays an important role in cellular energy homeostasis and in adenine nucleotide metabolism. The chain is Adenylate kinase from Prochlorococcus marinus (strain NATL1A).